The following is a 31-amino-acid chain: Diuretic hormone class 2 (31 aa).

A Proline amide modification is found at P31.

This sequence belongs to the diuretic hormone class 2 family.

The protein localises to the secreted. Functionally, regulation of fluid secretion. Stimulates primary urine secretion by Malpighian tubules and causes a dose-dependent stimulation of cAMP levels in the tubules. Has a nonselective effect on Na(+)/K(+) ion transport. In vitro, primarily elevates intracellular Ca(2+). This is Diuretic hormone class 2 from Apis mellifera (Honeybee).